A 425-amino-acid chain; its full sequence is UDP-N-acetyl-D-glucosamine 6-dehydrogenase (425 aa).

NAD(+) contacts are provided by Val17, Asp35, Arg40, Thr86, and Thr121. Cys261 (nucleophile) is an active-site residue. Arg332 is an NAD(+) binding site.

The protein belongs to the UDP-glucose/GDP-mannose dehydrogenase family. In terms of assembly, homotrimer.

It catalyses the reaction UDP-N-acetyl-alpha-D-glucosamine + 2 NAD(+) + H2O = UDP-2-acetamido-2-deoxy-alpha-D-glucuronate + 2 NADH + 3 H(+). It functions in the pathway capsule biogenesis; capsule polysaccharide biosynthesis. Its pathway is glycan metabolism; Vi-antigen biosynthesis. Dehydrogenase required for the biosynthesis of the capsular polysaccharide, commonly referred as the Vi antigen, an important virulence factor. Catalyzes the conversion of UDP-N-acetylglucosamine (UDP-GlcNAc) to UDP-N-acetylglucosaminuronic acid (UDP-GlcNAcA). Cannot use UDP-GalNAc, UDP-Glc and UDP-Gal as substrates. This Salmonella typhi protein is UDP-N-acetyl-D-glucosamine 6-dehydrogenase.